The following is a 1164-amino-acid chain: FH1/FH2 domain-containing protein 1 (1164 aa).

The GBD/FH3 domain maps to 53-458 (AQIPAVHRLL…AAETEKQVAL (406 aa)). Disordered regions lie at residues 340–411 (DIEE…VGPP) and 470–500 (MPNEAGGHPDARQLWDSPETAPAARTPQSPA). The segment covering 355 to 368 (KPSSEEGKRSRRSL) has biased composition (basic and acidic residues). The residue at position 367 (Ser-367) is a Phosphoserine. Residues 402-411 (GPASSPVGPP) show a composition bias toward low complexity. Ser-486 carries the post-translational modification Phosphoserine. The 129-residue stretch at 487-615 (PETAPAARTP…LAAPLPHSVP (129 aa)) folds into the FH1 domain. A Phosphothreonine modification is found at Thr-495. Residues Ser-498, Ser-523, and Ser-573 each carry the phosphoserine modification. Positions 566-619 (GKDIPAPSPPLPLLSGVPPPPPLPPPPPIKGPFPPPPPLPLAAPLPHSVPDSSA) are disordered. The span at 571–608 (APSPPLPLLSGVPPPPPLPPPPPIKGPFPPPPPLPLAA) shows a compositional bias: pro residues. The tract at residues 612–807 (HSVPDSSALP…AEPLFDLKVG (196 aa)) is interaction with ROCK1. Residues 616–1013 (DSSALPTKRK…YRERNKTRGR (398 aa)) enclose the FH2 domain. The residue at position 690 (Thr-690) is a Phosphothreonine. The stretch at 884–921 (LTRCAKVDFEQLTENLGQLERRSRAAEESLRSLAKHEL) forms a coiled coil. The interval 1020-1143 (KFSGVAGEAP…NRKSLRRTLK (124 aa)) is disordered. Positions 1028–1041 (APSNPSVPVAVSSG) are enriched in low complexity. The DAD domain maps to 1053-1133 (MKSLLTSRPE…AARERKRSRG (81 aa)). Residues 1073-1089 (MVQSSSPIMPTVGPSTA) are compositionally biased toward polar residues. Positions 1127 to 1142 (ERKRSRGNRKSLRRTL) are enriched in basic residues.

It belongs to the formin homology family. Self-associates via the FH2 domain. Binds to F-actin via its N-terminus. Binds to the cytoplasmic domain of CD21 via its C-terminus. Interacts with ROCK1 in a Src-dependent manner. Phosphorylated by ROCK1. In terms of tissue distribution, ubiquitous. Highly expressed in spleen.

The protein resides in the cytoplasm. Its subcellular location is the cytoskeleton. The protein localises to the cell projection. It is found in the bleb. Functionally, required for the assembly of F-actin structures, such as stress fibers. Depends on the Rho-ROCK cascade for its activity. Contributes to the coordination of microtubules with actin fibers and plays a role in cell elongation. Acts synergistically with ROCK1 to promote SRC-dependent non-apoptotic plasma membrane blebbing. The sequence is that of FH1/FH2 domain-containing protein 1 (FHOD1) from Homo sapiens (Human).